A 303-amino-acid polypeptide reads, in one-letter code: Recombination-associated protein RdgC (303 aa).

Belongs to the RdgC family.

The protein localises to the cytoplasm. It is found in the nucleoid. Functionally, may be involved in recombination. This chain is Recombination-associated protein RdgC, found in Serratia proteamaculans (strain 568).